We begin with the raw amino-acid sequence, 138 residues long: Large ribosomal subunit protein uL16 (138 aa).

Basic residues predominate over residues 1 to 16 (MLIPRRVKHRKQHHPG). The interval 1 to 24 (MLIPRRVKHRKQHHPGRSGAATGG) is disordered.

The protein belongs to the universal ribosomal protein uL16 family. In terms of assembly, part of the 50S ribosomal subunit.

Functionally, binds 23S rRNA and is also seen to make contacts with the A and possibly P site tRNAs. This is Large ribosomal subunit protein uL16 from Paenarthrobacter aurescens (strain TC1).